The sequence spans 1026 residues: Tyrosine-protein phosphatase 1 (1026 aa).

The 287-residue stretch at 29 to 315 folds into the FERM domain; it reads IRCTVTFLDS…EQHTFFRLKT (287 aa). Disordered regions lie at residues 376–396, 430–456, 489–515, and 584–616; these read SIDS…LPSS, PLTT…SLRQ, GIHA…KSAN, and SFAS…DQVV. A compositionally biased stretch (polar residues) spans 446–456; sequence DSESSAPSLRQ. Low complexity predominate over residues 600–609; it reads SPQSNKSSSP. A PDZ domain is found at 617–689; sequence TIKMRPDRHG…DHVVQFIRSA (73 aa). One can recognise a Tyrosine-protein phosphatase domain in the interval 753–1011; sequence VVDHFEMLYR…TFVCESILRA (259 aa). Substrate is bound by residues D920, 952 to 958, and Q996; that span reads CSAGIGR. C952 (phosphocysteine intermediate) is an active-site residue.

Belongs to the protein-tyrosine phosphatase family. Non-receptor class subfamily.

It is found in the cytoplasm. The protein localises to the cytoskeleton. It catalyses the reaction O-phospho-L-tyrosyl-[protein] + H2O = L-tyrosyl-[protein] + phosphate. This is Tyrosine-protein phosphatase 1 (ptp-1) from Caenorhabditis elegans.